Here is a 428-residue protein sequence, read N- to C-terminus: Adenylosuccinate synthetase (428 aa).

Residues 12–18 (GDEGKGK) and 40–42 (GHT) each bind GTP. Catalysis depends on Asp13, which acts as the Proton acceptor. Residues Asp13 and Gly40 each contribute to the Mg(2+) site. IMP contacts are provided by residues 13 to 16 (DEGK), 38 to 41 (NAGH), Thr130, Arg144, Gln224, Thr239, and Arg303. His41 (proton donor) is an active-site residue. 299 to 305 (VTTGRSR) lines the substrate pocket. GTP is bound by residues Arg305, 331-333 (KID), and 413-415 (GVG).

The protein belongs to the adenylosuccinate synthetase family. Homodimer. The cofactor is Mg(2+).

The protein localises to the cytoplasm. The enzyme catalyses IMP + L-aspartate + GTP = N(6)-(1,2-dicarboxyethyl)-AMP + GDP + phosphate + 2 H(+). The protein operates within purine metabolism; AMP biosynthesis via de novo pathway; AMP from IMP: step 1/2. In terms of biological role, plays an important role in the de novo pathway of purine nucleotide biosynthesis. Catalyzes the first committed step in the biosynthesis of AMP from IMP. This is Adenylosuccinate synthetase from Clostridium perfringens (strain 13 / Type A).